Reading from the N-terminus, the 483-residue chain is Glycogen synthase (483 aa).

K15 contacts ADP-alpha-D-glucose.

The protein belongs to the glycosyltransferase 1 family. Bacterial/plant glycogen synthase subfamily.

It carries out the reaction [(1-&gt;4)-alpha-D-glucosyl](n) + ADP-alpha-D-glucose = [(1-&gt;4)-alpha-D-glucosyl](n+1) + ADP + H(+). It participates in glycan biosynthesis; glycogen biosynthesis. Synthesizes alpha-1,4-glucan chains using ADP-glucose. The chain is Glycogen synthase from Thioalkalivibrio sulfidiphilus (strain HL-EbGR7).